Here is a 463-residue protein sequence, read N- to C-terminus: Soluble pyridine nucleotide transhydrogenase (463 aa).

35–44 provides a ligand contact to FAD; the sequence is EKQQAVGGNC.

Belongs to the class-I pyridine nucleotide-disulfide oxidoreductase family. FAD is required as a cofactor.

It localises to the cytoplasm. The catalysed reaction is NAD(+) + NADPH = NADH + NADP(+). Its function is as follows. Conversion of NADPH, generated by peripheral catabolic pathways, to NADH, which can enter the respiratory chain for energy generation. This is Soluble pyridine nucleotide transhydrogenase from Chromohalobacter salexigens (strain ATCC BAA-138 / DSM 3043 / CIP 106854 / NCIMB 13768 / 1H11).